The primary structure comprises 350 residues: Outer membrane protein A (350 aa).

Positions 1 to 21 are cleaved as a signal peptide; it reads MKKTAIAIAVALAGFATVAQA. The next 8 beta stranded transmembrane spans lie at 27-37, 59-70, 74-82, 100-111, 116-124, 146-155, 160-167, and 186-194; these read TWYAGGKLGWS, QLGAGAFGGYQV, LGFEMGYDW, QAVQLTAKLGYP, LDIYTRLGG, PVFAGGVEWA, IATRLEYQ, and MLSVGVSYR. 4 consecutive repeat copies span residues 205-206, 207-208, 209-210, and 211-212. The 4 X 2 AA tandem repeats of A-P stretch occupies residues 205 to 212; sequence APAPAPAP. In terms of domain architecture, OmpA-like spans 214-342; it reads VTTKTFTLKS…RVAIEVKGYK (129 aa). A disulfide bridge links C315 with C327.

Belongs to the outer membrane OOP (TC 1.B.6) superfamily. OmpA family. Monomer and homodimer.

Its subcellular location is the cell outer membrane. In terms of biological role, with TolR probably plays a role in maintaining the position of the peptidoglycan cell wall in the periplasm. Acts as a porin with low permeability that allows slow penetration of small solutes; an internal gate slows down solute passage. Required for conjugation with F-type plasmids; probably serves as the mating receptor on recipient cells. This Klebsiella aerogenes (Enterobacter aerogenes) protein is Outer membrane protein A.